Reading from the N-terminus, the 837-residue chain is Protein translocase subunit SecA 1 (837 aa).

ATP is bound by residues Q85, 103–107 (GEGKT), and D492. The disordered stretch occupies residues 791 to 837 (KGEAINPAEGKPEAKRQPIRKDQHIGRNDPCPCGSGKKYKNCHGKEA). A compositionally biased stretch (basic and acidic residues) spans 800-817 (GKPEAKRQPIRKDQHIGR). Residues C821, C823, C832, and H833 each contribute to the Zn(2+) site. The span at 827-837 (KKYKNCHGKEA) shows a compositional bias: basic residues.

It belongs to the SecA family. In terms of assembly, monomer and homodimer. Part of the essential Sec protein translocation apparatus which comprises SecA, SecYEG and auxiliary proteins SecDF. Other proteins may also be involved. Zn(2+) serves as cofactor.

It is found in the cell membrane. The protein localises to the cytoplasm. The enzyme catalyses ATP + H2O + cellular proteinSide 1 = ADP + phosphate + cellular proteinSide 2.. Part of the Sec protein translocase complex. Interacts with the SecYEG preprotein conducting channel. Has a central role in coupling the hydrolysis of ATP to the transfer of proteins into and across the cell membrane, serving as an ATP-driven molecular motor driving the stepwise translocation of polypeptide chains across the membrane. This Listeria monocytogenes serovar 1/2a (strain ATCC BAA-679 / EGD-e) protein is Protein translocase subunit SecA 1.